Consider the following 1099-residue polypeptide: Inverted formin-2 (1099 aa).

Residues 1–330 (MSLTEGAHTK…RAVLLADDCQ (330 aa)) form the GBD/FH3 domain. Basic and acidic residues-rich tracts occupy residues 348 to 359 (SSKEKRKTDKCT) and 367 to 385 (QTDKPKEESCEGKTVKKDP). 3 disordered regions span residues 348-391 (SSKE…SGIP), 432-509 (PSPP…PTPP), and 1000-1019 (AEKRKQQIADEETKRQKGEN). In terms of domain architecture, FH1 spans 426-569 (TCSSVLPSPP…GMLPPPPPLP (144 aa)). The span at 452–499 (PLPPPPPPLPGTELSPPPPGMVALSLPPPPPPLPGMGGMLPPPPPPLP) shows a compositional bias: pro residues. In terms of domain architecture, FH2 spans 621-1009 (FLKVNKPTLK…AEKRKQQIAD (389 aa)). Residues 907–1019 (LKKLRDLQNK…EETKRQKGEN (113 aa)) adopt a coiled-coil conformation. Residues 1037–1052 (DDLLADIKKGFQLRKT) enclose the WH2 domain. The segment at 1064-1085 (KTLSSETNRTDIQHVGKRPEVP) is disordered. The segment covering 1071 to 1083 (NRTDIQHVGKRPE) has biased composition (basic and acidic residues).

It belongs to the formin homology family.

This is Inverted formin-2 (inf2) from Xenopus laevis (African clawed frog).